The primary structure comprises 185 residues: Ribosome-recycling factor (185 aa).

It belongs to the RRF family.

It localises to the cytoplasm. Functionally, responsible for the release of ribosomes from messenger RNA at the termination of protein biosynthesis. May increase the efficiency of translation by recycling ribosomes from one round of translation to another. In Arthrobacter sp. (strain FB24), this protein is Ribosome-recycling factor.